Reading from the N-terminus, the 501-residue chain is Proline--tRNA ligase (501 aa).

It belongs to the class-II aminoacyl-tRNA synthetase family. ProS type 3 subfamily. In terms of assembly, homodimer.

Its subcellular location is the cytoplasm. It carries out the reaction tRNA(Pro) + L-proline + ATP = L-prolyl-tRNA(Pro) + AMP + diphosphate. Catalyzes the attachment of proline to tRNA(Pro) in a two-step reaction: proline is first activated by ATP to form Pro-AMP and then transferred to the acceptor end of tRNA(Pro). The protein is Proline--tRNA ligase of Halobacterium salinarum (strain ATCC 29341 / DSM 671 / R1).